The sequence spans 729 residues: Hydroxamate siderophore receptor FhuE (729 aa).

A signal peptide spans 1–36; that stretch reads MLSTQFNRDNQYQAITKPSLLAGCIALALLPSAAFA. Positions 42 to 49 match the TonB box motif; the sequence is ETVIVEGS. The segment at 48–72 is disordered; sequence GSATAPDDGENDYSVTSTSAGTKMQ. Over residues 60 to 72 the composition is skewed to polar residues; the sequence is YSVTSTSAGTKMQ. Positions 74–183 constitute a TBDR plug domain; the sequence is TQRDIPQSVT…PSAAINMVRK (110 aa). Positions 117, 142, 275, 357, 373, and 416 each coordinate Fe(III)-coprogen. Positions 189-729 constitute a TBDR beta-barrel domain; the sequence is EFKGDVSAEY…NFSITGTYQF (541 aa). The short motif at 712-729 is the TonB C-terminal box element; sequence SIVYGTPRNFSITGTYQF.

The protein belongs to the TonB-dependent receptor family.

It localises to the cell outer membrane. Its function is as follows. Involved in the active transport across the outer membrane of iron complexed with linear hydroxamate siderophores coprogen, rhodotorulic acid and ferrioxamine B. Binds Fe-coprogen with high affinity, rhodotorulic acid to a lesser extent, and weakly to ferrioxamine B. Selective for planar siderophores. Does not use cyclic siderophores ferrichrome nor ferrioxamine E as substrates. This chain is Hydroxamate siderophore receptor FhuE, found in Escherichia coli (strain K12).